Reading from the N-terminus, the 717-residue chain is Epithelial splicing regulatory protein 2 (717 aa).

Positions 1-14 (MTPPPPPPPPPGPD) are enriched in pro residues. Positions 1-23 (MTPPPPPPPPPGPDPAVDSATDP) are disordered. Ser83 is subject to Phosphoserine. 3 RRM domains span residues 247–343 (TVVR…RFLS), 348–428 (VILR…RSTA), and 465–545 (DCVR…PCST). Ser563 bears the Phosphoserine mark.

The protein belongs to the ESRP family. Interacts with RBPMS. As to expression, epithelial cell-specific.

The protein resides in the nucleus. Its function is as follows. mRNA splicing factor that regulates the formation of epithelial cell-specific isoforms. Specifically regulates the expression of FGFR2-IIIb, an epithelial cell-specific isoform of FGFR2. Also regulates the splicing of CD44, CTNND1, ENAH, 3 transcripts that undergo changes in splicing during the epithelial-to-mesenchymal transition (EMT). Acts by directly binding specific sequences in mRNAs. Binds the GU-rich sequence motifs in the ISE/ISS-3, a cis-element regulatory region present in the mRNA of FGFR2. The chain is Epithelial splicing regulatory protein 2 (Esrp2) from Mus musculus (Mouse).